The following is a 156-amino-acid chain: PopC secretion inhibitor (156 aa).

The disordered stretch occupies residues 1 to 89 (MNPGSAPWER…PVRSRAEVHQ (89 aa)). Residues 8 to 28 (WERRTRERMRAMSRKNGEWGD) are compositionally biased toward basic and acidic residues.

As to quaternary structure, interacts with PopC in non-starving cells.

It is found in the cytoplasm. With respect to regulation, in response to starvation, RelA is activated resulting in the accumulation of (p)ppGpp, which causes the degradation of PopD in an FtsH(D)-dependent manner, thereby releasing pre-formed PopC for secretion. Inhibitor of protease PopC. In non-starving cells, forms a cytoplasmic complex with PopC and inhibits PopC secretion and activity. In Myxococcus xanthus (strain DK1622), this protein is PopC secretion inhibitor.